The chain runs to 118 residues: MPRVKRGVQARRRHKKILKQAKGYYGARSRVFRVAKQAVIKAGQYQYRDRRQRKRQFRALWIARINAAARINGLSYSRFIAGLKQAAIEIDRKVLADLAVYEKEVFAAIVEKAKVSLA.

Belongs to the bacterial ribosomal protein bL20 family.

In terms of biological role, binds directly to 23S ribosomal RNA and is necessary for the in vitro assembly process of the 50S ribosomal subunit. It is not involved in the protein synthesizing functions of that subunit. The chain is Large ribosomal subunit protein bL20 from Marinomonas sp. (strain MWYL1).